A 475-amino-acid polypeptide reads, in one-letter code: Ankyrin repeat, SAM and basic leucine zipper domain-containing protein 1 (475 aa).

A disordered region spans residues 1-25 (MAAGALRGLPVAGGGESSESEDDGW). Phosphoserine is present on residues serine 17, serine 18, and serine 20. 6 ANK repeats span residues 45–74 (EKKE…SVDS), 78–107 (YGWT…NASF), 110–144 (DKQS…DPNV), 148–177 (RLMT…EVNT), 181–210 (NGYT…NKML), and 214–243 (DGKM…PLEG). Residues 272 to 334 (SYTAFGDLEV…KILAALKELQ (63 aa)) form the SAM domain.

In terms of assembly, interacts with DDX4, PIWIL1, RANBP9 and TDRD1.

It is found in the cytoplasm. Plays a central role during spermatogenesis by repressing transposable elements and preventing their mobilization, which is essential for the germline integrity. Acts via the piRNA metabolic process, which mediates the repression of transposable elements during meiosis by forming complexes composed of piRNAs and Piwi proteins and governs the methylation and subsequent repression of transposons. Its association with pi-bodies suggests a participation in the primary piRNAs metabolic process. Required prior to the pachytene stage to facilitate the production of multiple types of piRNAs, including those associated with repeats involved in the regulation of retrotransposons. May act by mediating protein-protein interactions during germ cell maturation. This is Ankyrin repeat, SAM and basic leucine zipper domain-containing protein 1 (ASZ1) from Nomascus leucogenys (Northern white-cheeked gibbon).